Reading from the N-terminus, the 665-residue chain is PR5-like receptor kinase (665 aa).

The N-terminal stretch at 1–24 is a signal peptide; it reads MVEGFSLSLMFLLVSHFFVSGVMS. Residues 25–276 are Extracellular-facing; the sequence is RNFTIENKCD…TKQKSSWKLK (252 aa). Residues asparagine 26 and asparagine 88 are each glycosylated (N-linked (GlcNAc...) asparagine). Cystine bridges form between cysteine 33-cysteine 249, cysteine 81-cysteine 91, cysteine 96-cysteine 103, cysteine 153-cysteine 238, cysteine 158-cysteine 221, cysteine 166-cysteine 184, cysteine 188-cysteine 197, and cysteine 198-cysteine 208. Asparagine 163 carries N-linked (GlcNAc...) asparagine glycosylation. Asparagine 233 carries N-linked (GlcNAc...) asparagine glycosylation. The helical transmembrane segment at 277–297 threads the bilayer; that stretch reads LIVGVSAALTLMILIVVVIIV. At 298 to 665 the chain is on the cytoplasmic side; it reads RTKNMRNSEW…DVLQHGSRSS (368 aa). Residues 331-620 form the Protein kinase domain; that stretch reads NSFAHVLGKG…ALQVPPNPLL (290 aa). Residues 337–345 and lysine 360 contribute to the ATP site; that span reads LGKGGFGTV. The active-site Proton acceptor is the aspartate 455.

In the N-terminal section; belongs to the thaumatin family. This sequence in the C-terminal section; belongs to the protein kinase superfamily. Ser/Thr protein kinase family. In terms of processing, autophosphorylated in vitro. In terms of tissue distribution, expressed in roots. Expressed at low levels in stems.

The protein localises to the membrane. It catalyses the reaction L-seryl-[protein] + ATP = O-phospho-L-seryl-[protein] + ADP + H(+). The enzyme catalyses L-threonyl-[protein] + ATP = O-phospho-L-threonyl-[protein] + ADP + H(+). Possesses kinase activity in vitro. This Arabidopsis thaliana (Mouse-ear cress) protein is PR5-like receptor kinase.